The chain runs to 356 residues: Calcium/calmodulin-dependent protein kinase type 1 (356 aa).

The short motif at 2 to 7 is the Nuclear localization signal element; sequence PLFKRR. Residues 22 to 278 enclose the Protein kinase domain; the sequence is YDFRDVLGTG…CQSALEHPWI (257 aa). Residues 28–36 and Lys-52 each bind ATP; that span reads LGTGAFSKV. The active-site Proton acceptor is the Asp-144. Thr-179 carries the post-translational modification Phosphothreonine; by ckk-1. Positions 278 to 318 are autoinhibitory domain; sequence ISGNTAYTHDIHRTVAVHLKKSLAKRNWKKAFNAAAAIRQL. The tract at residues 298–319 is calmodulin-binding; that stretch reads KSLAKRNWKKAFNAAAAIRQLQ.

It belongs to the protein kinase superfamily. CAMK Ser/Thr protein kinase family. CaMK subfamily. Mg(2+) is required as a cofactor.

The protein localises to the nucleus. Its subcellular location is the cytoplasm. It catalyses the reaction L-seryl-[protein] + ATP = O-phospho-L-seryl-[protein] + ADP + H(+). The enzyme catalyses L-threonyl-[protein] + ATP = O-phospho-L-threonyl-[protein] + ADP + H(+). Activated by Ca(2+)/calmodulin. Binding of calmodulin results in a conformational change that generates functional binding sites for both substrate and ATP, and thus relieves autoinhibition and lowers the Km of substrate binding. Must be phosphorylated by ckk-1 to be maximally active but this does not appear to be required for activity in AFD neurons. Functionally, calcium/calmodulin-dependent protein kinase that operates in the calcium-triggered CaMKK-CaMK1 signaling cascade which results in transcriptional activation. Transcriptional activation occurs at least in part through phosphorylation of crh-1. Regulates gene expression, sensory morphology, and function of the AFD thermosensory neurons. Involved in long-term adaptation of AFD neurons to temperatures warmer than the initial acclimatized cultivation temperature. Acts in the FLP thermal nociceptors to moderate the responsiveness to noxious heat and controls neuropeptide release from FLP neurons in response to temperature elevations. Regulates the dauer decision, the decision of the larvae to enter into the alternative stress-resistant and long-lived dauer developmental stage, based on the feeding state, primarily in the AWC sensory neurons. Acts non cell-autonomously in the AWC neurons to regulate expression of the daf-28 insulin-like peptide and cell-autonomously in the ASI sensory neurons to regulate expression of the growth promoting daf-7 in a food-regulated manner. Plays a role in memory-based thermal response of an individual AFD neuron cell. Involved in chemotaxis response in AWC neurons to attractant 2-heptanone, a volatile organic compound emitted by the nematode pathogenic bacterium B.nematocida B16. Represses transcription of glutamate receptor glr-1 in the nucleus basally and in response to change in synaptic activity. The chain is Calcium/calmodulin-dependent protein kinase type 1 (cmk-1) from Caenorhabditis briggsae.